Here is a 358-residue protein sequence, read N- to C-terminus: Protein-glutamate methylesterase/protein-glutamine glutaminase (358 aa).

Residues 5–122 enclose the Response regulatory domain; that stretch reads SVLIIDDSAL…RNSLEAYTDE (118 aa). Aspartate 56 carries the 4-aspartylphosphate modification. Residues 159–351 form the CheB-type methylesterase domain; the sequence is GISTEKLIII…RRILARLVGA (193 aa). Active-site residues include serine 171, histidine 197, and aspartate 293.

The protein belongs to the CheB family. In terms of processing, phosphorylated by CheA. Phosphorylation of the N-terminal regulatory domain activates the methylesterase activity.

The protein resides in the cytoplasm. It catalyses the reaction [protein]-L-glutamate 5-O-methyl ester + H2O = L-glutamyl-[protein] + methanol + H(+). It carries out the reaction L-glutaminyl-[protein] + H2O = L-glutamyl-[protein] + NH4(+). Involved in chemotaxis. Part of a chemotaxis signal transduction system that modulates chemotaxis in response to various stimuli. Catalyzes the demethylation of specific methylglutamate residues introduced into the chemoreceptors (methyl-accepting chemotaxis proteins or MCP) by CheR. Also mediates the irreversible deamidation of specific glutamine residues to glutamic acid. This Nitrosomonas europaea (strain ATCC 19718 / CIP 103999 / KCTC 2705 / NBRC 14298) protein is Protein-glutamate methylesterase/protein-glutamine glutaminase.